The sequence spans 209 residues: Uracil phosphoribosyltransferase (209 aa).

5-phospho-alpha-D-ribose 1-diphosphate contacts are provided by residues Arg-79, Arg-104, and 131–139 (DPMLATGGS). Residues Ile-194 and 199–201 (GDA) each bind uracil. Residue Asp-200 coordinates 5-phospho-alpha-D-ribose 1-diphosphate.

It belongs to the UPRTase family. Mg(2+) serves as cofactor.

It catalyses the reaction UMP + diphosphate = 5-phospho-alpha-D-ribose 1-diphosphate + uracil. Its pathway is pyrimidine metabolism; UMP biosynthesis via salvage pathway; UMP from uracil: step 1/1. Its activity is regulated as follows. Allosterically activated by GTP. Its function is as follows. Catalyzes the conversion of uracil and 5-phospho-alpha-D-ribose 1-diphosphate (PRPP) to UMP and diphosphate. The sequence is that of Uracil phosphoribosyltransferase from Symbiobacterium thermophilum (strain DSM 24528 / JCM 14929 / IAM 14863 / T).